A 137-amino-acid polypeptide reads, in one-letter code: Large ribosomal subunit protein uL13 (137 aa).

Belongs to the universal ribosomal protein uL13 family. In terms of assembly, part of the 50S ribosomal subunit.

Functionally, this protein is one of the early assembly proteins of the 50S ribosomal subunit, although it is not seen to bind rRNA by itself. It is important during the early stages of 50S assembly. The polypeptide is Large ribosomal subunit protein uL13 (Methanococcus maripaludis (strain DSM 14266 / JCM 13030 / NBRC 101832 / S2 / LL)).